The primary structure comprises 274 residues: Thiamine kinase (274 aa).

This sequence belongs to the thiamine kinase family.

The enzyme catalyses thiamine + ATP = thiamine phosphate + ADP + H(+). It participates in cofactor biosynthesis; thiamine diphosphate biosynthesis; thiamine phosphate from thiamine: step 1/1. Catalyzes the ATP-dependent phosphorylation of thiamine to thiamine phosphate. Is involved in thiamine salvage. The sequence is that of Thiamine kinase from Escherichia coli O9:H4 (strain HS).